We begin with the raw amino-acid sequence, 355 residues long: Protein RecA (355 aa).

Residue 67 to 74 (GPESSGKT) participates in ATP binding.

It belongs to the RecA family.

Its subcellular location is the cytoplasm. In terms of biological role, can catalyze the hydrolysis of ATP in the presence of single-stranded DNA, the ATP-dependent uptake of single-stranded DNA by duplex DNA, and the ATP-dependent hybridization of homologous single-stranded DNAs. It interacts with LexA causing its activation and leading to its autocatalytic cleavage. This chain is Protein RecA, found in Proteus mirabilis (strain HI4320).